The following is a 217-amino-acid chain: Probable GTP-binding protein EngB (217 aa).

In terms of domain architecture, EngB-type G spans 24–207 (SQPEICFAGR…HALIESWLIP (184 aa)). GTP contacts are provided by residues 32–39 (GRSNAGKS), 59–63 (GRTQH), 81–84 (DLPG), 148–151 (TKCD), and 185–188 (LFSA). 2 residues coordinate Mg(2+): S39 and T61.

This sequence belongs to the TRAFAC class TrmE-Era-EngA-EngB-Septin-like GTPase superfamily. EngB GTPase family. The cofactor is Mg(2+).

In terms of biological role, necessary for normal cell division and for the maintenance of normal septation. The chain is Probable GTP-binding protein EngB from Paraburkholderia xenovorans (strain LB400).